Reading from the N-terminus, the 2603-residue chain is Protein SABRE (2603 aa).

A signal peptide spans 1–35; that stretch reads MAASPAKFFFGFLIVSIVLWMIFMLFAWMLSRVLG. N-linked (GlcNAc...) asparagine glycosylation occurs at Asn196. The tract at residues 259-287 is disordered; that stretch reads FPKSKQSSASLRSDEVRTSATAASSAKKP. N-linked (GlcNAc...) asparagine glycans are attached at residues Asn331, Asn486, Asn597, Asn807, Asn867, Asn887, Asn1154, Asn1249, Asn1280, and Asn1408. The segment at 786–814 is disordered; that stretch reads PESGCNKGISSVKDGGPSEKINQSNSVNK. Residues 1416–1436 form a disordered region; that stretch reads FHQSPSSTEHPTDVGTVYSSQ. 2 N-linked (GlcNAc...) asparagine glycosylation sites follow: Asn1492 and Asn1659. 2 disordered regions span residues 1656 to 1676 and 1717 to 1777; these read EFENGSESDEHIRSDPSDDDG and EPPK…DDIG. A compositionally biased stretch (basic and acidic residues) spans 1731-1748; sequence KIHEENQKESCPETHQGE. Residues 1749 to 1766 are compositionally biased toward polar residues; it reads MSRSSASPGRNLPSSPSH. A coiled-coil region spans residues 1995–2023; sequence VEEVELAKINLEEKERERKLLLDDIRKLS. Asn2333 is a glycosylation site (N-linked (GlcNAc...) asparagine). 3 disordered regions span residues 2339–2380, 2448–2479, and 2554–2603; these read EQQE…RPRK, GKKFKDKSHNNRESTDNDLNLSDNDQTGKPDQ, and IRRH…DFRE. The segment covering 2343–2380 has biased composition (basic and acidic residues); the sequence is DFSKQKVKEIKPVKSGRSSHEEKKAGKSHEEKKSRPRK. The N-linked (GlcNAc...) asparagine glycan is linked to Asn2467. The span at 2554 to 2565 shows a compositional bias: basic residues; sequence IRRHTKKFRPRS. The segment covering 2566-2583 has biased composition (polar residues); that stretch reads QRGSTSQQRESLPSSPIE. Over residues 2586 to 2603 the composition is skewed to low complexity; sequence PFESGYSSGSSPYEDFRE.

Belongs to the SABRE family. Highest levels in leaves, also expressed in leaves, flowers, and siliques, and, to a lower extent, in roots and stems.

It localises to the secreted. The protein localises to the golgi apparatus. In terms of biological role, may be involved in membrane trafficking. Required for cell expansion, especially in root cortex, probably by counteracting the action of ethylene in promoting cells radial expansion. Involved in female organ development. Antagonistically interacts with ethylene signaling to regulate plant responses to Pi starvation. The protein is Protein SABRE of Arabidopsis thaliana (Mouse-ear cress).